The primary structure comprises 581 residues: Adenine deaminase (581 aa).

It belongs to the metallo-dependent hydrolases superfamily. Adenine deaminase family. Mn(2+) serves as cofactor.

It carries out the reaction adenine + H2O + H(+) = hypoxanthine + NH4(+). The sequence is that of Adenine deaminase from Brucella abortus (strain 2308).